The following is a 182-amino-acid chain: tRNA-splicing endonuclease (182 aa).

Catalysis depends on residues tyrosine 119, histidine 127, and lysine 158.

This sequence belongs to the tRNA-intron endonuclease family. Archaeal short subfamily. Homotetramer; although the tetramer contains four active sites, only two participate in the cleavage. Therefore, it should be considered as a dimer of dimers.

It catalyses the reaction pretRNA = a 3'-half-tRNA molecule with a 5'-OH end + a 5'-half-tRNA molecule with a 2',3'-cyclic phosphate end + an intron with a 2',3'-cyclic phosphate and a 5'-hydroxyl terminus.. Its function is as follows. Endonuclease that removes tRNA introns. Cleaves pre-tRNA at the 5'- and 3'-splice sites to release the intron. The products are an intron and two tRNA half-molecules bearing 2',3' cyclic phosphate and 5'-OH termini. Recognizes a pseudosymmetric substrate in which 2 bulged loops of 3 bases are separated by a stem of 4 bp. This is tRNA-splicing endonuclease from Saccharolobus solfataricus (strain ATCC 35092 / DSM 1617 / JCM 11322 / P2) (Sulfolobus solfataricus).